A 358-amino-acid chain; its full sequence is Probable tartrate dehydrogenase/decarboxylase TtuC' (358 aa).

Mn(2+)-binding residues include Asp222, Asp246, and Asp250.

Belongs to the isocitrate and isopropylmalate dehydrogenases family. Mg(2+) is required as a cofactor. It depends on Mn(2+) as a cofactor. K(+) serves as cofactor.

It is found in the cytoplasm. It carries out the reaction tartrate + NAD(+) = 2-hydroxy-3-oxosuccinate + NADH + H(+). The catalysed reaction is (2R,3S)-tartrate + NAD(+) = 2-hydroxy-3-oxosuccinate + NADH + H(+). It catalyses the reaction (2R,3R)-tartrate + NAD(+) = 2-hydroxy-3-oxosuccinate + NADH + H(+). The enzyme catalyses (2R,3R)-tartrate + H(+) = (R)-glycerate + CO2. It carries out the reaction (R)-malate + NAD(+) = pyruvate + CO2 + NADH. Its pathway is carbohydrate acid metabolism; tartrate degradation; 2-hydroxy-3-oxosuccinate from L-tartrate: step 1/1. It participates in carbohydrate acid metabolism; tartrate degradation; 2-hydroxy-3-oxosuccinate from meso-tartrate: step 1/1. The protein operates within carbohydrate acid metabolism; tartrate degradation; D-glycerate from L-tartrate: step 1/1. Functionally, has multiple catalytic activities. Apart from catalyzing the oxidation of (+)-tartrate to oxaloglycolate, also converts meso-tartrate to D-glycerate and catalyzes the oxidative decarboxylation of D-malate to pyruvate. In Agrobacterium vitis (Rhizobium vitis), this protein is Probable tartrate dehydrogenase/decarboxylase TtuC' (ttuC').